The sequence spans 371 residues: Ecto-ADP-ribosyltransferase 3 (371 aa).

The first 26 residues, 1–26, serve as a signal peptide directing secretion; sequence MKMGHFEMVTTLLAAAVLMDIFQVKA. Cys43 and Cys255 are disulfide-bonded. One can recognise a TR mART core domain in the interval 64–250; it reads ALLRMVWDNA…LVLQSINSTC (187 aa). Tyr101 and Asn182 together coordinate NAD(+). Residues 306–346 are disordered; that stretch reads VLQTEENPLLPDEKPDRSRGKANNPTPGLVPGPKSHPSASS. A lipid anchor (GPI-anchor amidated serine) is attached at Ser345. A propeptide spans 346–371 (removed in mature form); it reads SGNTLLPSVMASTILLVASAVNFIEL.

This sequence belongs to the Arg-specific ADP-ribosyltransferase family.

Its subcellular location is the cell membrane. It catalyses the reaction L-arginyl-[protein] + NAD(+) = N(omega)-(ADP-D-ribosyl)-L-arginyl-[protein] + nicotinamide + H(+). The sequence is that of Ecto-ADP-ribosyltransferase 3 (Art3) from Mus musculus (Mouse).